The following is a 355-amino-acid chain: MSLCTVEINLSTIKNNYLLLQDVCKTSLVGAAVKANGYGLGAVQISKALIEENCRHFFVASSEEGVNLRNALGLDVNILVLNGVFEHDALELIEYNLTPVLNNLKQIEIWQKFSNLKNRLLPCYLHFNTGINRLGLSSDEIEQLINDRDLLKGLDLQYIISHLAISEEIDNPYNLEQLNRFKAYLQYFPNVKASLANSGGIFLGQDYHFDLARPGAALYGLNPLTKNPVTLKAPIIHLQNLTLDSHIGYNMTFTTKRDSVIATLPLGYADGFSRNFSNQGEVFINSRSVPIVGRVSMDLINIDVTDLPPSEIFLGQEAEIIGNYCTPDKIASIIGTIGYEVLTNLGSRYKRKYIG.

Lysine 34 serves as the catalytic Proton acceptor; specific for D-alanine. Lysine 34 carries the post-translational modification N6-(pyridoxal phosphate)lysine. Substrate is bound at residue arginine 133. Catalysis depends on tyrosine 249, which acts as the Proton acceptor; specific for L-alanine. Methionine 297 contributes to the substrate binding site.

The protein belongs to the alanine racemase family. The cofactor is pyridoxal 5'-phosphate.

The enzyme catalyses L-alanine = D-alanine. It functions in the pathway amino-acid biosynthesis; D-alanine biosynthesis; D-alanine from L-alanine: step 1/1. Functionally, catalyzes the interconversion of L-alanine and D-alanine. May also act on other amino acids. The chain is Alanine racemase (alr) from Rickettsia peacockii (strain Rustic).